A 547-amino-acid chain; its full sequence is Chaperonin GroEL (547 aa).

ATP is bound by residues 30–33 (TLGP), lysine 51, 87–91 (DGTTT), glycine 415, and aspartate 495. The tract at residues 526–547 (QDATPTASPDMGGMGGMGGGMM) is disordered. The span at 537–547 (GGMGGMGGGMM) shows a compositional bias: gly residues.

Belongs to the chaperonin (HSP60) family. In terms of assembly, forms a cylinder of 14 subunits composed of two heptameric rings stacked back-to-back. Interacts with the co-chaperonin GroES.

The protein localises to the cytoplasm. The enzyme catalyses ATP + H2O + a folded polypeptide = ADP + phosphate + an unfolded polypeptide.. Functionally, together with its co-chaperonin GroES, plays an essential role in assisting protein folding. The GroEL-GroES system forms a nano-cage that allows encapsulation of the non-native substrate proteins and provides a physical environment optimized to promote and accelerate protein folding. The polypeptide is Chaperonin GroEL (Vesicomyosocius okutanii subsp. Calyptogena okutanii (strain HA)).